The chain runs to 764 residues: Calpain-like protease palB/RIM13 (764 aa).

One can recognise a Calpain catalytic domain in the interval 95 to 368 (GEFYPPLTVY…FKYFYINWNP (274 aa)). Active-site residues include Cys-165, His-318, and Asn-336.

It belongs to the peptidase C2 family. PalB/RIM13 subfamily.

Functionally, required for the proteolytic cleavage of the transcription factor RIM101 in response to alkaline ambient pH. The sequence is that of Calpain-like protease palB/RIM13 from Debaryomyces hansenii (strain ATCC 36239 / CBS 767 / BCRC 21394 / JCM 1990 / NBRC 0083 / IGC 2968) (Yeast).